Reading from the N-terminus, the 141-residue chain is MLEEFKKFALRGNVVDLAVGVIIGAAFGAIVNSLVQDVIMPIIGAVTGGLDFSNYYIPLSSKVQDGMPYAEAKKVGAVIGYGQFLTLAVNFTIIAFVLFMVIRAMNVLKSREEAKPKPVAEVPADVKLLGEIRDLLAARRV.

The next 3 membrane-spanning stretches (helical) occupy residues 14–34 (VVDL…VNSL), 38–58 (VIMP…YYIP), and 82–102 (GQFL…FMVI).

The protein belongs to the MscL family. As to quaternary structure, homopentamer.

It localises to the cell inner membrane. Functionally, channel that opens in response to stretch forces in the membrane lipid bilayer. May participate in the regulation of osmotic pressure changes within the cell. The protein is Large-conductance mechanosensitive channel of Methylorubrum extorquens (strain CM4 / NCIMB 13688) (Methylobacterium extorquens).